Here is a 335-residue protein sequence, read N- to C-terminus: Protein-arginine N-acetylglucosaminyltransferase SseK3 (335 aa).

Residues 51–53 and Y75 each bind UDP-N-acetyl-alpha-D-glucosamine; that span reads QWF. N-beta-linked (GlcNAc) arginine; by autocatalysis glycosylation is found at R153 and R184. 224–227 is a UDP-N-acetyl-alpha-D-glucosamine binding site; the sequence is YLDA. A DXD motif motif is present at residues 226–228; that stretch reads DAD. D228 serves as a coordination point for Mn(2+). E258 functions as the Proton acceptor in the catalytic mechanism. R305 carries an N-beta-linked (GlcNAc) arginine; by autocatalysis glycan. D325 and S327 together coordinate Mn(2+). UDP-N-acetyl-alpha-D-glucosamine contacts are provided by residues S327 and 332–335; that span reads SSWR. R335 is a glycosylation site (N-beta-linked (GlcNAc) arginine; by autocatalysis).

The protein belongs to the glycosyltransferase NleB family. As to quaternary structure, interacts with host TRIM32; without mediating its GlcNAcylation. Mn(2+) is required as a cofactor. Auto-glycosylated: arginine GlcNAcylation is required for activity toward death domain-containing host target proteins.

It localises to the secreted. Its subcellular location is the host Golgi apparatus. It carries out the reaction L-arginyl-[protein] + UDP-N-acetyl-alpha-D-glucosamine = N(omega)-(N-acetyl-beta-D-glucosaminyl)-L-arginyl-[protein] + UDP + H(+). In terms of biological role, protein-arginine N-acetylglucosaminyltransferase effector that disrupts TNF signaling in infected cells, including NF-kappa-B signaling and apoptosis. Acts by catalyzing the transfer of a single N-acetylglucosamine (GlcNAc) to a conserved arginine residue in the death domain of host proteins such as TRADD, TNFRSF1A/TNFR1 and TNFRSF10B/TRAILR2: arginine GlcNAcylation prevents homotypic/heterotypic death domain interactions and assembly of the oligomeric TNF-alpha receptor complex, thereby disrupting TNF signaling. Also acts on host proteins without a death domain: catalyzes arginine GlcNAcylation of host small Rab GTPase (Rab1, Rab5 and Rab11), thereby preventing GTPase activity and leading to impaired host vesicular protein transport. Also mediates auto-GlcNAcylation, which is required for activity toward death domain-containing host target proteins. The chain is Protein-arginine N-acetylglucosaminyltransferase SseK3 from Salmonella typhimurium (strain SL1344).